A 291-amino-acid polypeptide reads, in one-letter code: UPF0276 protein VV1_0952 (291 aa).

It belongs to the UPF0276 family.

This is UPF0276 protein VV1_0952 from Vibrio vulnificus (strain CMCP6).